The sequence spans 479 residues: Ribulose bisphosphate carboxylase large chain 2 (479 aa).

Residues N116 and T166 each coordinate substrate. Residue K168 is the Proton acceptor of the active site. Substrate is bound at residue K170. Mg(2+) is bound by residues K194, D196, and E197. K194 is modified (N6-carboxylysine). Catalysis depends on H287, which acts as the Proton acceptor. 3 residues coordinate substrate: R288, H320, and S372.

The protein belongs to the RuBisCO large chain family. Type I subfamily. In terms of assembly, heterohexadecamer of 8 large chains and 8 small chains. Mg(2+) serves as cofactor.

The catalysed reaction is 2 (2R)-3-phosphoglycerate + 2 H(+) = D-ribulose 1,5-bisphosphate + CO2 + H2O. The enzyme catalyses D-ribulose 1,5-bisphosphate + O2 = 2-phosphoglycolate + (2R)-3-phosphoglycerate + 2 H(+). Functionally, ruBisCO catalyzes two reactions: the carboxylation of D-ribulose 1,5-bisphosphate, the primary event in carbon dioxide fixation, as well as the oxidative fragmentation of the pentose substrate. Both reactions occur simultaneously and in competition at the same active site. In Bradyrhizobium sp. (strain ORS 278), this protein is Ribulose bisphosphate carboxylase large chain 2.